Consider the following 146-residue polypeptide: Prolactin-inducible protein (146 aa).

A signal peptide spans 1–28 (MRLLQLLFRASPATLLLVLCLQLGANKA). Glutamine 29 carries the pyrrolidone carboxylic acid modification. Intrachain disulfides connect cysteine 65–cysteine 91 and cysteine 89–cysteine 123. Asparagine 105 is a glycosylation site (N-linked (GlcNAc...) asparagine).

Belongs to the PIP family. In terms of assembly, monomer. Interacts with AZGP1. Expressed in pathological conditions of the mammary gland and in several exocrine tissues, such as the lacrimal, salivary, and sweat glands.

It is found in the secreted. The chain is Prolactin-inducible protein (PIP) from Homo sapiens (Human).